Reading from the N-terminus, the 578-residue chain is Proline--tRNA ligase (578 aa).

Belongs to the class-II aminoacyl-tRNA synthetase family. ProS type 1 subfamily. As to quaternary structure, homodimer.

The protein localises to the cytoplasm. It carries out the reaction tRNA(Pro) + L-proline + ATP = L-prolyl-tRNA(Pro) + AMP + diphosphate. Its function is as follows. Catalyzes the attachment of proline to tRNA(Pro) in a two-step reaction: proline is first activated by ATP to form Pro-AMP and then transferred to the acceptor end of tRNA(Pro). As ProRS can inadvertently accommodate and process non-cognate amino acids such as alanine and cysteine, to avoid such errors it has two additional distinct editing activities against alanine. One activity is designated as 'pretransfer' editing and involves the tRNA(Pro)-independent hydrolysis of activated Ala-AMP. The other activity is designated 'posttransfer' editing and involves deacylation of mischarged Ala-tRNA(Pro). The misacylated Cys-tRNA(Pro) is not edited by ProRS. The sequence is that of Proline--tRNA ligase from Paraburkholderia xenovorans (strain LB400).